Consider the following 1976-residue polypeptide: Putative callose synthase 8 (1976 aa).

Over 1–530 (MSHEIVPVDP…FWQIFRSFDR (530 aa)) the chain is Cytoplasmic. The chain crosses the membrane as a helical span at residues 531–551 (MWSFFVLSLQALIIMACHDVG). Topologically, residues 552-565 (SPLQVFNANIFEDV) are extracellular. The helical transmembrane segment at 566–586 (MSIFITSAILKLIKGILDIIF) threads the bilayer. Residues 587–602 (KWKARNTMPINEKKKR) are Cytoplasmic-facing. Residues 603–623 (LVKLGFAAMWTIILPVLYSHS) form a helical membrane-spanning segment. The Extracellular segment spans residues 624-648 (RRKYICYFTNYKTWLGEWCFSPYMV). A helical transmembrane segment spans residues 649–669 (AVTIYLTGSAIELVLFFVPAI). The Cytoplasmic portion of the chain corresponds to 670–707 (SKYIETSNHGIFKTLSWWGQPRLYVGRGMQETQVSQFK). A helical transmembrane segment spans residues 708–728 (YTFFWILVLLTKFAFSYAFEI). Residues 729–759 (KPLIEPTRLIMKVGVRNYEWHEIFPEVKSNA) lie on the Extracellular side of the membrane. A helical membrane pass occupies residues 760 to 780 (AAIVAVWAPIMVVYFMDTQIW). Residues 781–1544 (YSVYCTIFGG…FDFFRMLSCY (764 aa)) are Cytoplasmic-facing. Residues 1545–1565 (FTTIGFYFSSLISVIGIYIYL) traverse the membrane as a helical segment. Residues 1566–1595 (YGQLYLVLSGLQKTLILEAKVKNIKSLETA) lie on the Extracellular side of the membrane. A helical transmembrane segment spans residues 1596–1616 (LASQSFIQLGLLTGLPMVMEI). Topologically, residues 1617-1620 (GLEK) are cytoplasmic. A helical transmembrane segment spans residues 1621 to 1641 (GFLIAFQDFILMQLQLAAFFF). Residues 1642–1688 (TFSLGTKTHYFGRTILHGGAKYRPTGRKVVVFHANFSENYRLYSRSH) are Extracellular-facing. An N-linked (GlcNAc...) asparagine glycan is attached at N1676. A helical membrane pass occupies residues 1689-1709 (FIKGFELMILLVVYELFKHTS). Residues 1710-1715 (QSNMAY) lie on the Cytoplasmic side of the membrane. The chain crosses the membrane as a helical span at residues 1716–1736 (SFITFSVWFMSFTWLCAPFLF). The Extracellular portion of the chain corresponds to 1737–1790 (NPSGFTWEIIVGDWRDWNRWIKEQGGIGIQQDKSWQSWWNDEQAHLRGSGVGAR). A helical membrane pass occupies residues 1791 to 1811 (CLEIILSLRFFVYQYGLVYHL). The Cytoplasmic portion of the chain corresponds to 1812-1819 (DITQSNTN). The chain crosses the membrane as a helical span at residues 1820–1840 (IIVYALSWVVILATFFTVKAV). At 1841–1856 (DLGRQLFSTRKHLVFR) the chain is on the extracellular side. A helical transmembrane segment spans residues 1857-1877 (FFKVFVFVSILTIIITLANIC). Residues 1878–1884 (HLSVKDL) are Cytoplasmic-facing. A helical membrane pass occupies residues 1885 to 1905 (LVSCLAFLPTGWGLILIAQAV). Topologically, residues 1906 to 1928 (RPKIEGTSLWEFTQVLARAYDYG) are extracellular. Residues 1929–1949 (MGVVLFAPMAILAWLPIISAF) form a helical membrane-spanning segment. The Cytoplasmic portion of the chain corresponds to 1950–1976 (QTRFLFNEAFNRRLQIQPILAGKKKNR).

This sequence belongs to the glycosyltransferase 48 family.

Its subcellular location is the cell membrane. The enzyme catalyses [(1-&gt;3)-beta-D-glucosyl](n) + UDP-alpha-D-glucose = [(1-&gt;3)-beta-D-glucosyl](n+1) + UDP + H(+). Involved in callose synthesis at the forming cell plate during cytokinesis. During plant growth and development, callose is found as a transitory component of the cell plate in dividing cells, is a major component of pollen mother cell walls and pollen tubes, and is found as a structural component of plasmodesmatal canals. This Arabidopsis thaliana (Mouse-ear cress) protein is Putative callose synthase 8 (CALS8).